The sequence spans 390 residues: Ammonium/H(+) antiporter subunit AmhT (390 aa).

The next 10 helical transmembrane spans lie at 2 to 22, 31 to 51, 52 to 72, 94 to 114, 143 to 163, 178 to 198, 212 to 232, 266 to 286, 288 to 308, and 351 to 371; these read VIPE…TGFV, VVIF…SHLL, HFAG…EFPL, FGVT…SLII, FMLG…AVLV, LLVV…VFLF, DLFI…ALYL, LLLP…EGIP, IPLL…VGVL, and VFIL…PSIA.

This sequence belongs to the monovalent cation:proton antiporter 2 (CPA2) transporter (TC 2.A.37) family. In terms of assembly, interacts with AmhM.

It localises to the cell membrane. With respect to regulation, amhT alone exhibits antiport activity, but interaction with AmhM confers different properties, such as higher KM for potassium. Its function is as follows. Ammonium/proton antiporter that mediates the efflux of ammonium ions. Can also transport potassium or rubidium, but not sodium or lithium. This chain is Ammonium/H(+) antiporter subunit AmhT (amhT), found in Alkalihalophilus pseudofirmus (strain ATCC BAA-2126 / JCM 17055 / OF4) (Bacillus pseudofirmus).